Consider the following 99-residue polypeptide: Beta-2-microglobulin (99 aa).

Positions proline 5–valine 93 constitute an Ig-like C1-type domain. Cysteine 25 and cysteine 80 are joined by a disulfide.

This sequence belongs to the beta-2-microglobulin family. In terms of assembly, heterodimer of an alpha chain and a beta chain. Beta-2-microglobulin is the beta-chain of major histocompatibility complex class I molecules.

Its subcellular location is the secreted. In terms of biological role, component of the class I major histocompatibility complex (MHC). Involved in the presentation of peptide antigens to the immune system. The polypeptide is Beta-2-microglobulin (B2M) (Cavia porcellus (Guinea pig)).